A 406-amino-acid chain; its full sequence is Membrane protein UL43 homolog (406 aa).

The next 10 membrane-spanning stretches (helical) occupy residues 48–68 (LFLV…QYHV), 71–91 (AAVN…PTSV), 103–123 (CLQT…CPIS), 126–146 (LPFV…VAAV), 162–182 (IYFY…VILY), 188–208 (YEVL…VDAA), 266–286 (SVIP…SHII), 299–319 (LAVS…AVLY), 339–359 (IAVT…STVA), and 386–406 (VYHV…TYVS).

Belongs to the alphaherpesvirinae HHV-1 UL43 family.

The protein resides in the membrane. This Varicella-zoster virus (strain Dumas) (HHV-3) protein is Membrane protein UL43 homolog.